Here is a 596-residue protein sequence, read N- to C-terminus: Putative terpene synthase 2, chloroplastic (596 aa).

The transit peptide at 1-46 (MATLSMQVSTLSKQVKNLNTFGMGSASKLPMVARRVSTTRLRPICS) directs the protein to the chloroplast. Residues Asp349 and Asp353 each coordinate Mn(2+). Residues 349–353 (DDVYD) carry the DDXXD motif motif. 2 homodimerization regions span residues 355–361 (YGTLDEL) and 427–464 (EAKWYYAGYTPTLAEYLENAKVSISSPTIISQVYFTLP). 2 residues coordinate Mn(2+): Asp493 and Glu501.

The protein belongs to the terpene synthase family. In terms of assembly, homodimer. Mn(2+) serves as cofactor. The cofactor is Mg(2+).

The protein localises to the plastid. It localises to the chloroplast. The protein operates within secondary metabolite biosynthesis; terpenoid biosynthesis. In terms of biological role, putative monoterpene synthase inactive on geranyl diphosphate (GPP). In Thymus vulgaris (Thyme), this protein is Putative terpene synthase 2, chloroplastic.